We begin with the raw amino-acid sequence, 105 residues long: Large ribosomal subunit protein uL24 (105 aa).

This sequence belongs to the universal ribosomal protein uL24 family. As to quaternary structure, part of the 50S ribosomal subunit.

One of two assembly initiator proteins, it binds directly to the 5'-end of the 23S rRNA, where it nucleates assembly of the 50S subunit. Functionally, one of the proteins that surrounds the polypeptide exit tunnel on the outside of the subunit. The polypeptide is Large ribosomal subunit protein uL24 (Xanthomonas campestris pv. campestris (strain 8004)).